The primary structure comprises 284 residues: Cysteine-rich repeat secretory protein 8 (284 aa).

A signal peptide spans 1 to 27 (MATFIRFTAPLFCFFFLFSLFSHQTMS). Gnk2-homologous domains are found at residues 32–136 (MATF…NVSF) and 151–259 (SLAT…TTGL).

Belongs to the cysteine-rich repeat secretory protein family.

The protein localises to the secreted. The protein is Cysteine-rich repeat secretory protein 8 (CRRSP8) of Arabidopsis thaliana (Mouse-ear cress).